The following is a 432-amino-acid chain: Adenylosuccinate synthetase 1 (432 aa).

Residues 12–18 (GDEGKGR) and 40–42 (GHT) each bind GTP. Catalysis depends on Asp-13, which acts as the Proton acceptor. Mg(2+) is bound by residues Asp-13 and Gly-40. Residues 13 to 16 (DEGK), 38 to 41 (NAGH), Thr-128, Arg-142, Gln-222, Thr-237, and Arg-301 contribute to the IMP site. Residue His-41 is the Proton donor of the active site. 297–303 (TNTGRPR) contributes to the substrate binding site. GTP contacts are provided by residues Arg-303, 329–331 (KLD), and 411–413 (STG).

It belongs to the adenylosuccinate synthetase family. As to quaternary structure, homodimer. The cofactor is Mg(2+).

Its subcellular location is the cytoplasm. It carries out the reaction IMP + L-aspartate + GTP = N(6)-(1,2-dicarboxyethyl)-AMP + GDP + phosphate + 2 H(+). The protein operates within purine metabolism; AMP biosynthesis via de novo pathway; AMP from IMP: step 1/2. Its function is as follows. Plays an important role in the de novo pathway of purine nucleotide biosynthesis. Catalyzes the first committed step in the biosynthesis of AMP from IMP. The sequence is that of Adenylosuccinate synthetase 1 from Chromobacterium violaceum (strain ATCC 12472 / DSM 30191 / JCM 1249 / CCUG 213 / NBRC 12614 / NCIMB 9131 / NCTC 9757 / MK).